A 435-amino-acid chain; its full sequence is Cyclin-dependent kinase 15 (435 aa).

The region spanning 103 to 387 is the Protein kinase domain; the sequence is YLNLEKLGEG…AQEALVHDYF (285 aa). Residues 109 to 117 and K132 each bind ATP; that span reads LGEGSYATV. Residue D224 is the Proton acceptor of the active site.

The protein belongs to the protein kinase superfamily. CMGC Ser/Thr protein kinase family. CDC2/CDKX subfamily. The cofactor is Mg(2+).

The enzyme catalyses L-seryl-[protein] + ATP = O-phospho-L-seryl-[protein] + ADP + H(+). It carries out the reaction L-threonyl-[protein] + ATP = O-phospho-L-threonyl-[protein] + ADP + H(+). Its function is as follows. Serine/threonine-protein kinase that acts like an antiapoptotic protein that counters TRAIL/TNFSF10-induced apoptosis by inducing phosphorylation of BIRC5 at 'Thr-34'. The sequence is that of Cyclin-dependent kinase 15 (CDK15) from Homo sapiens (Human).